The primary structure comprises 104 residues: Growth-regulated protein homolog (104 aa).

The signal sequence occupies residues 1 to 31; sequence MAPAATAAAPRLLRAALLLLLLVAAGRRAAG. Cystine bridges form between C40-C66 and C42-C82.

Belongs to the intercrine alpha (chemokine CxC) family.

The protein resides in the secreted. Its function is as follows. Plays a role in monocyte adhesion to the endothelium. In Oryctolagus cuniculus (Rabbit), this protein is Growth-regulated protein homolog.